The chain runs to 203 residues: Ras-related protein RABD2a (203 aa).

GTP is bound by residues 15–23 (GDSGVGKSC), 33–40 (YVESYIST), 63–67 (DTAGQ), 121–124 (NKSD), and 151–153 (SAK). Positions 37–45 (YISTIGVDF) match the Effector region motif. The tract at residues 176–203 (QPAGNNARPPTVQIRGQPVAQKNGCCST) is disordered. 2 S-geranylgeranyl cysteine lipidation sites follow: Cys200 and Cys201.

It belongs to the small GTPase superfamily. Rab family. As to quaternary structure, does not interact with GC5.

The protein resides in the golgi apparatus. It localises to the trans-Golgi network membrane. The protein localises to the golgi apparatus membrane. Its function is as follows. Protein transport. Regulator of membrane traffic from the Golgi apparatus towards the endoplasmic reticulum (ER). The sequence is that of Ras-related protein RABD2a (RABD2A) from Arabidopsis thaliana (Mouse-ear cress).